A 195-amino-acid chain; its full sequence is MAFVLSLLMALVLVSYGPGGSLGCYLSQRLMLDARENLKLLDRMNRLSPHSCLQDRKDFGLPQEMVEGDQLQKDQAFPVLYEMLQQSFNLFYTEHSSAAWDTTLLEQLCTGLQQQLDHLDTCRGQVMGEEDSELGNMDPIVTVKKYFQGIYDYLQEKGYSDCAWEIVRVEMMRALTVSTTLQKRLTKMGGDLNSP.

Residues methionine 1–glycine 23 form the signal peptide. 2 disulfides stabilise this stretch: cysteine 24–cysteine 122 and cysteine 52–cysteine 162.

Belongs to the alpha/beta interferon family. IFN-alphaII subfamily. As to expression, constitutively and exclusively expressed in the mononuclear cells of the extraembryonic trophectoderm.

The protein resides in the secreted. Paracrine hormone primarily responsible for maternal recognition of pregnancy. Interacts with endometrial receptors, probably type I interferon receptors, and blocks estrogen receptor expression, preventing the estrogen-induced increase in oxytocin receptor expression in the endometrium. This results in the suppression of the pulsatile endometrial release of the luteolytic hormone prostaglandin F2-alpha, hindering the regression of the corpus luteum (luteolysis) and therefore a return to ovarian cyclicity. This, and a possible direct effect of IFN-tau on prostaglandin synthesis, leads in turn to continued ovarian progesterone secretion, which stimulates the secretion by the endometrium of the nutrients required for the growth of the conceptus. In summary, displays particularly high antiviral and antiproliferative potency concurrently with particular weak cytotoxicity, high antiluteolytic activity and immunomodulatory properties. In contrast with other IFNs, IFN-tau is not virally inducible. The protein is Interferon tau-2 (IFNT2) of Ovis aries (Sheep).